Consider the following 693-residue polypeptide: Transforming growth factor beta activator LRRC33 (693 aa).

Positions 1–19 (MEFPPLWLCLGFHFLIVEW) are cleaved as a signal peptide. Residues 20-651 (RSGPGTATAA…CKWEQVDTGL (632 aa)) lie on the Extracellular side of the membrane. One can recognise an LRRNT domain in the interval 29 to 56 (ASQGGCKVVDGVADCRGLNLASVPSSLP). 10 LRR repeats span residues 58–79 (HSRMLILDANPLKDLWNHSLQA), 82–103 (RLENLSLHSCHLDRISHYAFRE), 106–127 (HLRNLVLADNRLSENYKESAAA), 133–155 (GLRRLDLSGNSLTEDMAALMLQN), 158–179 (SLEVVSLARNTLMRLDDSIFEG), 182–203 (HLVELDLQRNYIFEIEGGAFDG), 206–227 (ELRRLNLAYNNLPCIVDFSLTQ), 228–239 (LRFLNVSYNILE), 251–272 (ELEILDLSHNQLLFFPLLPQCG), and 273–294 (KLHTLLLQDNNMGFYRELYNTS). N-linked (GlcNAc...) asparagine glycans are attached at residues N74 and N85. N155 carries an N-linked (GlcNAc...) asparagine glycan. N-linked (GlcNAc...) asparagine glycosylation occurs at N232. 3 N-linked (GlcNAc...) asparagine glycosylation sites follow: N292, N309, and N312. LRR repeat units follow at residues 329-350 (ALRFLDMSQNQFRHLPDGFLKK), 353-374 (SLSHLNLNQNCLKMLHIREHEP), 377-398 (ALTELDLSHNQLAELHLAPGLT), 403-424 (NLRVFNLSSNQLLGVPTGLFDN), 427-448 (SITTIDMSHNQISLCPQMVPVD), 463-484 (SLRSLSLDGCGLKALQDCPFQG), 486-507 (SLTHLDLSSNWGVLNGSISPLW), 512-533 (TLQVLSLRDVGLGSGAAEMDFS), 537-558 (NLRALDLSGNSLTSFPKFKGSL), 559-580 (ALRTLDLRRNSLTALPQRVVSE), and 585-605 (GLQTIYLSQNPYDCCGVEGWG). N408 and N424 each carry an N-linked (GlcNAc...) asparagine glycan. An N-linked (GlcNAc...) asparagine glycan is attached at N500. The LRRCT domain occupies 606-644 (ALQQHFKTVADLSMVTCNLSSKIVRVVELPEGLPQGCKW). N623 carries an N-linked (GlcNAc...) asparagine glycan. The chain crosses the membrane as a helical span at residues 652–672 (FYLVLILPSCLTLLVACTVVF). Over 673–693 (LTFKKPLLQVIKSRCHWSSIY) the chain is Cytoplasmic.

Belongs to the LRRC32/LRRC33 family. In terms of assembly, interacts with TGFB1; associates via disulfide bonds with the Latency-associated peptide chain (LAP) regulatory chain of TGFB1, leading to regulate activation of TGF-beta-1. Interacts (via LRR repeats) with TLR2, TLR3, TLR4, TLR9 and probably other Toll-like receptors. Interacts with CYBB/NOX2; the interaction is direct. In terms of processing, N-glycosylated. In terms of tissue distribution, mainly expressed in cells of hematopoietic origin, such as in immune organs such as lymph nodes, thymus and spleen. Among leukocytes, expressed at higher level in myeloid cell such as macrophages, neutrophils and dendritic cells. Highly expressed in central nervous system-resident macrophages, including microglia and perivascular macrophages.

Its subcellular location is the cell membrane. It localises to the endoplasmic reticulum membrane. Key regulator of transforming growth factor beta-1 (TGFB1) specifically required for microglia function in the nervous system. Required for activation of latent TGF-beta-1 in macrophages and microglia: associates specifically via disulfide bonds with the Latency-associated peptide (LAP), which is the regulatory chain of TGFB1, and regulates integrin-dependent activation of TGF-beta-1. TGF-beta-1 activation mediated by LRRC33/NRROS is highly localized: there is little spreading of TGF-beta-1 activated from one microglial cell to neighboring microglia, suggesting the existence of localized and selective activation of TGF-beta-1 by LRRC33/NRROS. Indirectly plays a role in Toll-like receptor (TLR) signaling: ability to inhibit TLR-mediated NF-kappa-B activation and cytokine production is probably a consequence of its role in TGF-beta-1 signaling. The sequence is that of Transforming growth factor beta activator LRRC33 from Mus musculus (Mouse).